Here is a 97-residue protein sequence, read N- to C-terminus: Aspartyl/glutamyl-tRNA(Asn/Gln) amidotransferase subunit C (97 aa).

This sequence belongs to the GatC family. In terms of assembly, heterotrimer of A, B and C subunits.

It carries out the reaction L-glutamyl-tRNA(Gln) + L-glutamine + ATP + H2O = L-glutaminyl-tRNA(Gln) + L-glutamate + ADP + phosphate + H(+). It catalyses the reaction L-aspartyl-tRNA(Asn) + L-glutamine + ATP + H2O = L-asparaginyl-tRNA(Asn) + L-glutamate + ADP + phosphate + 2 H(+). In terms of biological role, allows the formation of correctly charged Asn-tRNA(Asn) or Gln-tRNA(Gln) through the transamidation of misacylated Asp-tRNA(Asn) or Glu-tRNA(Gln) in organisms which lack either or both of asparaginyl-tRNA or glutaminyl-tRNA synthetases. The reaction takes place in the presence of glutamine and ATP through an activated phospho-Asp-tRNA(Asn) or phospho-Glu-tRNA(Gln). The sequence is that of Aspartyl/glutamyl-tRNA(Asn/Gln) amidotransferase subunit C from Listeria welshimeri serovar 6b (strain ATCC 35897 / DSM 20650 / CCUG 15529 / CIP 8149 / NCTC 11857 / SLCC 5334 / V8).